A 184-amino-acid polypeptide reads, in one-letter code: UPF0398 protein BCB4264_A1614 (184 aa).

This sequence belongs to the UPF0398 family.

The protein is UPF0398 protein BCB4264_A1614 of Bacillus cereus (strain B4264).